Reading from the N-terminus, the 860-residue chain is Leucine--tRNA ligase (860 aa).

The short motif at 42–52 is the 'HIGH' region element; the sequence is PYPSGRLHMGH. Residues 619–623 carry the 'KMSKS' region motif; the sequence is KMSKS. Position 622 (Lys-622) interacts with ATP.

This sequence belongs to the class-I aminoacyl-tRNA synthetase family.

It is found in the cytoplasm. The catalysed reaction is tRNA(Leu) + L-leucine + ATP = L-leucyl-tRNA(Leu) + AMP + diphosphate. This chain is Leucine--tRNA ligase, found in Escherichia coli (strain SMS-3-5 / SECEC).